The chain runs to 364 residues: MQELKRTPLYNIHLAAGAKMVEFGGWLMPVQYEGIIAEHQAVRSAAGLFDVSHMGEIQISGPTAREFVQRLVTNDISRLKPGCAIYSPMCNPQGGTVDDLLVYQLEDQQYLLVVNASNTDKDFHWIVSQQVPGVEIQNVSEVTCQLALQGPQAEKILQRLTAVDLSHIKSFCFVYGAVEGIHCLISRTGYTGEAGFELYFPASHAERVWQAIMATGATDGLRPVGLGARDTLRFEACLALYGHELTDDISPLMAGLGWTVKFNKPEFVGKEPLLKQKEAGTTYQLVGLEMIDRGIPRQGYAIFKEGQEVGWITSGTFAPTLGKNMGLGYVEIPFADVGKELNIMVRNKPLKARIVKKPFYKREV.

Belongs to the GcvT family. In terms of assembly, the glycine cleavage system is composed of four proteins: P, T, L and H.

The catalysed reaction is N(6)-[(R)-S(8)-aminomethyldihydrolipoyl]-L-lysyl-[protein] + (6S)-5,6,7,8-tetrahydrofolate = N(6)-[(R)-dihydrolipoyl]-L-lysyl-[protein] + (6R)-5,10-methylene-5,6,7,8-tetrahydrofolate + NH4(+). Its function is as follows. The glycine cleavage system catalyzes the degradation of glycine. The polypeptide is Aminomethyltransferase (Desulforamulus reducens (strain ATCC BAA-1160 / DSM 100696 / MI-1) (Desulfotomaculum reducens)).